An 805-amino-acid polypeptide reads, in one-letter code: H(+)/Cl(-) exchange transporter 7 (805 aa).

The disordered stretch occupies residues 1–49; sequence MANVSKKVSWSGRDRDDEEAAPLLRRTARPGGGTPLLNGAGPGAARQSP. Residues 1-126 are Cytoplasmic-facing; that stretch reads MANVSKKVSW…TAFRTVEIKR (126 aa). 2 positions are modified to phosphoserine: serine 9 and serine 60. Helical transmembrane passes span 127-159 and 174-197; these read WVICALIGILTGLVACFIDIVVENLAGLKYRVI and FSLLLWATLNAAFVLVGSVIVAFI. The Selectivity filter part_1 motif lies at 203–207; sequence GSGIP. Serine 204 is a binding site for chloride. The segment at residues 206 to 213 is an intramembrane region (helical); sequence IPQIKCFL. Transmembrane regions (helical) follow at residues 223–241 and 247–264; these read RLKTLVIKVSGVILSVVGG and EGPMIHSGSVIAAGISQG. The Selectivity filter part_2 motif lies at 245-249; that stretch reads GKEGP. 2 consecutive intramembrane regions (helical) follow at residues 288–300 and 304–312; these read FVSAGAAAGVSAA and PVGGVLFSL. The next 5 membrane-spanning stretches (helical) occupy residues 322-341, 375-405, 410-432, 487-507, and 512-535; these read FLTWRIFFASMISTFTLNFV, IPVFIAMGVVGGVLGAVFNALNYWLTMFRIR, PCLQVIEAVLVAAVTATVAFVLI, PLTLGLFTLVYFFLACWTYGL, and GVFIPSLLIGAAWGRLFGISLSYL. The short motif at 512 to 516 is the Selectivity filter part_3 element; it reads GVFIP. Phenylalanine 514 contributes to the chloride binding site. The segment at residues 545 to 559 is an intramembrane region (helical); it reads GKYALMGAAAQLGGI. An intramembrane region (note=Loop between two helices) is located at residues 560–562; sequence VRM. Positions 563–574 form an intramembrane region, helical; that stretch reads TLSLTVIMMEAT. The segment at residues 575–578 is an intramembrane region (note=Loop between two helices); it reads SNVT. Residues 579 to 597 form a helical membrane-spanning segment; it reads YGFPIMLVLMTAKIVGDVF. The Cytoplasmic portion of the chain corresponds to 598-805; sequence IEGLYDMHIQ…GLEELSLAQT (208 aa). Tyrosine 602 serves as a coordination point for chloride. CBS domains are found at residues 631–695 and 741–799; these read MSTP…VFVE and MNPS…GLEE. ATP-binding positions include 658 to 660 and 783 to 786; these read HNG and TRKD. Phosphoserine is present on serine 801.

It belongs to the chloride channel (TC 2.A.49) family. ClC-7/CLCN7 subfamily. As to quaternary structure, chloride channel 7 are heteromers of alpha (CLCN7) and beta (OSTM1) subunits. In terms of tissue distribution, brain and kidney.

The protein resides in the lysosome membrane. It carries out the reaction 2 chloride(in) + H(+)(out) = 2 chloride(out) + H(+)(in). Its function is as follows. Slowly voltage-gated channel mediating the exchange of chloride ions against protons. Functions as antiporter and contributes to the acidification of the lysosome lumen and may be involved in maintaining lysosomal pH. The CLC channel family contains both chloride channels and proton-coupled anion transporters that exchange chloride or another anion for protons. The presence of conserved gating glutamate residues is typical for family members that function as antiporters. The chain is H(+)/Cl(-) exchange transporter 7 from Homo sapiens (Human).